Here is a 234-residue protein sequence, read N- to C-terminus: Large ribosomal subunit protein uL1 (234 aa).

It belongs to the universal ribosomal protein uL1 family. Part of the 50S ribosomal subunit.

Binds directly to 23S rRNA. The L1 stalk is quite mobile in the ribosome, and is involved in E site tRNA release. In terms of biological role, protein L1 is also a translational repressor protein, it controls the translation of the L11 operon by binding to its mRNA. The polypeptide is Large ribosomal subunit protein uL1 (Pectobacterium atrosepticum (strain SCRI 1043 / ATCC BAA-672) (Erwinia carotovora subsp. atroseptica)).